The chain runs to 389 residues: Elongation factor Tu-3 (389 aa).

A tr-type G domain is found at 10-203; sequence KPHLNIGTMG…AVDTYVPMPE (194 aa). Residues 19–26 form a G1 region; that stretch reads GHVDHGKT. A GTP-binding site is contributed by 19-26; it reads GHVDHGKT. Thr-26 is a binding site for Mg(2+). The interval 60–64 is G2; that stretch reads GITIN. The G3 stretch occupies residues 81–84; sequence DMPG. GTP is bound by residues 81–85 and 136–139; these read DMPGH and NKAD. Residues 136–139 form a G4 region; the sequence is NKAD. Residues 173–175 are G5; sequence SGL.

Belongs to the TRAFAC class translation factor GTPase superfamily. Classic translation factor GTPase family. EF-Tu/EF-1A subfamily. In terms of assembly, monomer.

Its subcellular location is the cytoplasm. The catalysed reaction is GTP + H2O = GDP + phosphate + H(+). Functionally, GTP hydrolase that promotes the GTP-dependent binding of aminoacyl-tRNA to the A-site of ribosomes during protein biosynthesis. This Streptomyces ramocissimus protein is Elongation factor Tu-3.